Consider the following 349-residue polypeptide: 5-deoxyribose 1-phosphate isomerase (349 aa).

Residues 49-51 (RGA), R92, and Q199 contribute to the substrate site. D240 serves as the catalytic Proton donor. 250–251 (NK) contacts substrate.

It belongs to the EIF-2B alpha/beta/delta subunits family. DrdI subfamily.

The catalysed reaction is 5-deoxy-alpha-D-ribose 1-phosphate = 5-deoxy-D-ribulose 1-phosphate. It participates in carbohydrate degradation. Its function is as follows. Catalyzes the isomerization of 5-deoxy-alpha-D-ribose 1-phosphate to 5-deoxy-D-ribulose 1-phosphate, as part of a 5-deoxyribose salvage pathway that recycles this toxic radical SAM enzyme by-product to mainstream metabolites. The polypeptide is 5-deoxyribose 1-phosphate isomerase (Clostridium botulinum (strain ATCC 19397 / Type A)).